A 156-amino-acid polypeptide reads, in one-letter code: ATP synthase subunit b (156 aa).

Residues 11 to 31 (AIAFFIFVVFCMKYVWPPLMA) form a helical membrane-spanning segment.

Belongs to the ATPase B chain family. In terms of assembly, F-type ATPases have 2 components, F(1) - the catalytic core - and F(0) - the membrane proton channel. F(1) has five subunits: alpha(3), beta(3), gamma(1), delta(1), epsilon(1). F(0) has three main subunits: a(1), b(2) and c(10-14). The alpha and beta chains form an alternating ring which encloses part of the gamma chain. F(1) is attached to F(0) by a central stalk formed by the gamma and epsilon chains, while a peripheral stalk is formed by the delta and b chains.

Its subcellular location is the cell inner membrane. Functionally, f(1)F(0) ATP synthase produces ATP from ADP in the presence of a proton or sodium gradient. F-type ATPases consist of two structural domains, F(1) containing the extramembraneous catalytic core and F(0) containing the membrane proton channel, linked together by a central stalk and a peripheral stalk. During catalysis, ATP synthesis in the catalytic domain of F(1) is coupled via a rotary mechanism of the central stalk subunits to proton translocation. Its function is as follows. Component of the F(0) channel, it forms part of the peripheral stalk, linking F(1) to F(0). The protein is ATP synthase subunit b of Aeromonas hydrophila subsp. hydrophila (strain ATCC 7966 / DSM 30187 / BCRC 13018 / CCUG 14551 / JCM 1027 / KCTC 2358 / NCIMB 9240 / NCTC 8049).